A 384-amino-acid polypeptide reads, in one-letter code: S-adenosylmethionine synthase (384 aa).

Residue His15 coordinates ATP. Residue Asp17 participates in Mg(2+) binding. K(+) is bound at residue Glu43. Residues Glu56 and Gln99 each coordinate L-methionine. Residues 99-109 (QSSDINQGVDR) are flexible loop. Residues 164–166 (DAK), 230–231 (RF), Asp239, 245–246 (RK), Ala262, and Lys266 contribute to the ATP site. Residue Asp239 coordinates L-methionine. An L-methionine-binding site is contributed by Lys270.

The protein belongs to the AdoMet synthase family. As to quaternary structure, homotetramer; dimer of dimers. The cofactor is Mg(2+). It depends on K(+) as a cofactor.

Its subcellular location is the cytoplasm. It carries out the reaction L-methionine + ATP + H2O = S-adenosyl-L-methionine + phosphate + diphosphate. It participates in amino-acid biosynthesis; S-adenosyl-L-methionine biosynthesis; S-adenosyl-L-methionine from L-methionine: step 1/1. Catalyzes the formation of S-adenosylmethionine (AdoMet) from methionine and ATP. The overall synthetic reaction is composed of two sequential steps, AdoMet formation and the subsequent tripolyphosphate hydrolysis which occurs prior to release of AdoMet from the enzyme. The protein is S-adenosylmethionine synthase of Histophilus somni (strain 129Pt) (Haemophilus somnus).